The chain runs to 77 residues: Large ribosomal subunit protein bL28 (77 aa).

The protein belongs to the bacterial ribosomal protein bL28 family.

The chain is Large ribosomal subunit protein bL28 from Paracidovorax citrulli (strain AAC00-1) (Acidovorax citrulli).